Here is a 125-residue protein sequence, read N- to C-terminus: Glycine cleavage system H protein (125 aa).

In terms of domain architecture, Lipoyl-binding spans 23–105; the sequence is VSTVGITEHA…FEGGWLFKVR (83 aa). K64 is modified (N6-lipoyllysine).

Belongs to the GcvH family. In terms of assembly, the glycine cleavage system is composed of four proteins: P, T, L and H. (R)-lipoate is required as a cofactor.

Functionally, the glycine cleavage system catalyzes the degradation of glycine. The H protein shuttles the methylamine group of glycine from the P protein to the T protein. This is Glycine cleavage system H protein from Streptomyces coelicolor (strain ATCC BAA-471 / A3(2) / M145).